A 173-amino-acid polypeptide reads, in one-letter code: Nicotinamide-nucleotide adenylyltransferase (173 aa).

This sequence belongs to the archaeal NMN adenylyltransferase family.

The protein localises to the cytoplasm. The catalysed reaction is beta-nicotinamide D-ribonucleotide + ATP + H(+) = diphosphate + NAD(+). The protein operates within cofactor biosynthesis; NAD(+) biosynthesis; NAD(+) from nicotinamide D-ribonucleotide: step 1/1. This is Nicotinamide-nucleotide adenylyltransferase (ffdC) from Methanolobus tindarius.